A 125-amino-acid chain; its full sequence is Large ribosomal subunit protein bL12 (125 aa).

This sequence belongs to the bacterial ribosomal protein bL12 family. Homodimer. Part of the ribosomal stalk of the 50S ribosomal subunit. Forms a multimeric L10(L12)X complex, where L10 forms an elongated spine to which 2 to 4 L12 dimers bind in a sequential fashion. Binds GTP-bound translation factors.

Functionally, forms part of the ribosomal stalk which helps the ribosome interact with GTP-bound translation factors. Is thus essential for accurate translation. The chain is Large ribosomal subunit protein bL12 from Mannheimia succiniciproducens (strain KCTC 0769BP / MBEL55E).